The chain runs to 278 residues: Glutamate racemase (278 aa).

Substrate is bound by residues 25-26 (DS) and 57-58 (YG). Cys89 (proton donor/acceptor) is an active-site residue. 90-91 (NT) contacts substrate. Catalysis depends on Cys204, which acts as the Proton donor/acceptor. 205 to 206 (TH) is a binding site for substrate.

It belongs to the aspartate/glutamate racemases family.

The enzyme catalyses L-glutamate = D-glutamate. It functions in the pathway cell wall biogenesis; peptidoglycan biosynthesis. In terms of biological role, provides the (R)-glutamate required for cell wall biosynthesis. In Brucella anthropi (strain ATCC 49188 / DSM 6882 / CCUG 24695 / JCM 21032 / LMG 3331 / NBRC 15819 / NCTC 12168 / Alc 37) (Ochrobactrum anthropi), this protein is Glutamate racemase.